Consider the following 535-residue polypeptide: CTP synthase (535 aa).

The amidoligase domain stretch occupies residues 1-267 (MTKYIFVTGG…DKLVCDHMKL (267 aa)). Residue Ser-13 coordinates CTP. A UTP-binding site is contributed by Ser-13. 14–19 (SLGKGI) is a binding site for ATP. Tyr-54 provides a ligand contact to L-glutamine. Asp-71 is a binding site for ATP. Residues Asp-71 and Glu-141 each coordinate Mg(2+). Residues 148 to 150 (DIE), 188 to 193 (KTKPTQ), and Lys-224 each bind CTP. UTP contacts are provided by residues 188 to 193 (KTKPTQ) and Lys-224. Residues 292–534 (TISLVGKYVE…IGASVQAAEQ (243 aa)) enclose the Glutamine amidotransferase type-1 domain. L-glutamine is bound at residue Gly-354. Cys-381 functions as the Nucleophile; for glutamine hydrolysis in the catalytic mechanism. L-glutamine-binding positions include 382-385 (LGMQ), Glu-405, and Arg-462. Catalysis depends on residues His-507 and Glu-509.

The protein belongs to the CTP synthase family. In terms of assembly, homotetramer.

It catalyses the reaction UTP + L-glutamine + ATP + H2O = CTP + L-glutamate + ADP + phosphate + 2 H(+). The enzyme catalyses L-glutamine + H2O = L-glutamate + NH4(+). It carries out the reaction UTP + NH4(+) + ATP = CTP + ADP + phosphate + 2 H(+). It participates in pyrimidine metabolism; CTP biosynthesis via de novo pathway; CTP from UDP: step 2/2. Its activity is regulated as follows. Allosterically activated by GTP, when glutamine is the substrate; GTP has no effect on the reaction when ammonia is the substrate. The allosteric effector GTP functions by stabilizing the protein conformation that binds the tetrahedral intermediate(s) formed during glutamine hydrolysis. Inhibited by the product CTP, via allosteric rather than competitive inhibition. Its function is as follows. Catalyzes the ATP-dependent amination of UTP to CTP with either L-glutamine or ammonia as the source of nitrogen. Regulates intracellular CTP levels through interactions with the four ribonucleotide triphosphates. The sequence is that of CTP synthase from Bacillus velezensis (strain DSM 23117 / BGSC 10A6 / LMG 26770 / FZB42) (Bacillus amyloliquefaciens subsp. plantarum).